The primary structure comprises 27 residues: Cruzioseptin-14 (27 aa).

Expressed by the skin glands.

It is found in the secreted. Its function is as follows. Has antimicrobial activity. The sequence is that of Cruzioseptin-14 from Cruziohyla calcarifer (Splendid leaf frog).